Reading from the N-terminus, the 444-residue chain is tRNA modification GTPase MnmE (444 aa).

(6S)-5-formyl-5,6,7,8-tetrahydrofolate-binding residues include Arg22, Glu79, and Arg118. The 155-residue stretch at Gly214–Gly368 folds into the TrmE-type G domain. Asn224 lines the K(+) pocket. Residues Asn224–Ser229, Thr243–Thr249, and Asp268–Gly271 contribute to the GTP site. Ser228 lines the Mg(2+) pocket. Residues Thr243, Val245, and Thr248 each contribute to the K(+) site. Thr249 contacts Mg(2+). Residue Lys444 coordinates (6S)-5-formyl-5,6,7,8-tetrahydrofolate.

It belongs to the TRAFAC class TrmE-Era-EngA-EngB-Septin-like GTPase superfamily. TrmE GTPase family. Homodimer. Heterotetramer of two MnmE and two MnmG subunits. Requires K(+) as cofactor.

The protein resides in the cytoplasm. Functionally, exhibits a very high intrinsic GTPase hydrolysis rate. Involved in the addition of a carboxymethylaminomethyl (cmnm) group at the wobble position (U34) of certain tRNAs, forming tRNA-cmnm(5)s(2)U34. The chain is tRNA modification GTPase MnmE from Alkalilimnicola ehrlichii (strain ATCC BAA-1101 / DSM 17681 / MLHE-1).